A 99-amino-acid chain; its full sequence is MSTLTKSDMIEHLMNHLNLTRQEGRCLVENFFDELSESLIDGKEVKLSGFGNFELKDKNSRPGRNPKTGEPVAVSARRVVTFKTGQKFRQQVDERLFDQ.

The protein belongs to the bacterial histone-like protein family. In terms of assembly, heterodimer of an alpha and a beta chain.

This protein is one of the two subunits of integration host factor, a specific DNA-binding protein that functions in genetic recombination as well as in transcriptional and translational control. In Psychrobacter cryohalolentis (strain ATCC BAA-1226 / DSM 17306 / VKM B-2378 / K5), this protein is Integration host factor subunit alpha.